A 130-amino-acid chain; its full sequence is Small ribosomal subunit protein uS9 (130 aa).

Belongs to the universal ribosomal protein uS9 family.

The sequence is that of Small ribosomal subunit protein uS9 from Bacillus licheniformis (strain ATCC 14580 / DSM 13 / JCM 2505 / CCUG 7422 / NBRC 12200 / NCIMB 9375 / NCTC 10341 / NRRL NRS-1264 / Gibson 46).